A 251-amino-acid polypeptide reads, in one-letter code: Chloride intracellular channel protein 5 (251 aa).

Residues 1–98 are required for insertion into the membrane; the sequence is MTDSATANGD…EEFLEETLTP (98 aa). Residues 32-35 carry the G-site motif; the sequence is CPFS. A helical membrane pass occupies residues 34-54; it reads FSQRLFMILWLKGVVFNVTTV. The 141-residue stretch at 101–241 folds into the GST C-terminal domain; that stretch reads YPKLAARHRE…AADSEIELAY (141 aa).

Belongs to the chloride channel CLIC family. Component of a multimeric complex consisting of several cytoskeletal proteins, including actin, ezrin, alpha-actinin, gelsolin, and IQGAP1. Interacts with AKAP9. Interacts with TPRN. TPRN, CLIC5 and PTPQR form concentric rings at the base of stereocilia and may form a complex. Interacts with EZR, MYO6 and RDX; the proteins may work together as a complex to stabilize linkages between the plasma membrane and subjacent actin cytoskeleton at the stereocilium base. As to expression, detected in cochlea, in cochlear and vestibular hair cell bundles in the organ of Corti (at protein level). Expressed neonatal and adult cardiomyocytes (at protein level).

It is found in the golgi apparatus. The protein localises to the cytoplasm. The protein resides in the cytoskeleton. Its subcellular location is the microtubule organizing center. It localises to the centrosome. It is found in the cell cortex. The protein localises to the membrane. The protein resides in the apical cell membrane. Its subcellular location is the mitochondrion. It localises to the cell projection. It is found in the stereocilium. It catalyses the reaction Na(+)(in) = Na(+)(out). The enzyme catalyses K(+)(in) = K(+)(out). The catalysed reaction is chloride(in) = chloride(out). Inhibited by F-actin. In the soluble state, catalyzes glutaredoxin-like thiol disulfide exchange reactions with reduced glutathione as electron donor. Can insert into membranes and form non-selective ion channels almost equally permeable to Na(+), K(+) and Cl(-). Required for normal hearing. It is necessary for the formation of stereocilia in the inner ear and normal development of the organ of Corti. May play a role in the regulation of transepithelial ion absorption and secretion. Is required for the development and/or maintenance of the proper glomerular endothelial cell and podocyte architecture. Plays a role in formation of the lens suture in the eye, which is important for normal optical properties of the lens. The sequence is that of Chloride intracellular channel protein 5 (Clic5) from Rattus norvegicus (Rat).